The chain runs to 114 residues: UPF0145 protein YG5714_0873 (114 aa).

The protein belongs to the UPF0145 family.

The polypeptide is UPF0145 protein YG5714_0873 (Saccharolobus islandicus (strain Y.G.57.14 / Yellowstone #1) (Sulfolobus islandicus)).